The following is a 245-amino-acid chain: Flavin-dependent thymidylate synthase (245 aa).

In terms of domain architecture, ThyX spans 5-210 (IKVRLVNYTK…ELRPIIRWAK (206 aa)). FAD contacts are provided by residues S59, 83–85 (RHR), and Q91. Residues 80–83 (QLVR), 91–95 (QQSMR), and R149 each bind dUMP. The ThyX motif signature appears at 83–93 (RHRIASYTQQS). Residues 165–167 (NLR) and H171 each bind FAD. DUMP is bound at residue R176. The active-site Involved in ionization of N3 of dUMP, leading to its activation is R176.

The protein belongs to the thymidylate synthase ThyX family. Homotetramer. It depends on FAD as a cofactor.

It carries out the reaction dUMP + (6R)-5,10-methylene-5,6,7,8-tetrahydrofolate + NADPH + H(+) = dTMP + (6S)-5,6,7,8-tetrahydrofolate + NADP(+). The protein operates within pyrimidine metabolism; dTTP biosynthesis. Functionally, catalyzes the reductive methylation of 2'-deoxyuridine-5'-monophosphate (dUMP) to 2'-deoxythymidine-5'-monophosphate (dTMP) while utilizing 5,10-methylenetetrahydrofolate (mTHF) as the methyl donor, and NADPH and FADH(2) as the reductant. The protein is Flavin-dependent thymidylate synthase of Thermococcus onnurineus (strain NA1).